The sequence spans 210 residues: Thymidylate kinase (210 aa).

10 to 17 provides a ligand contact to ATP; sequence GLEGAGKT.

The protein belongs to the thymidylate kinase family.

It carries out the reaction dTMP + ATP = dTDP + ADP. Its function is as follows. Phosphorylation of dTMP to form dTDP in both de novo and salvage pathways of dTTP synthesis. In Erwinia tasmaniensis (strain DSM 17950 / CFBP 7177 / CIP 109463 / NCPPB 4357 / Et1/99), this protein is Thymidylate kinase.